Reading from the N-terminus, the 444-residue chain is Tubulin beta-4 chain (444 aa).

The GTP site is built by glutamine 11, glutamate 69, serine 138, glycine 142, threonine 143, glycine 144, asparagine 204, and asparagine 226. Glutamate 69 is a binding site for Mg(2+).

Belongs to the tubulin family. Dimer of alpha and beta chains. A typical microtubule is a hollow water-filled tube with an outer diameter of 25 nm and an inner diameter of 15 nM. Alpha-beta heterodimers associate head-to-tail to form protofilaments running lengthwise along the microtubule wall with the beta-tubulin subunit facing the microtubule plus end conferring a structural polarity. Microtubules usually have 13 protofilaments but different protofilament numbers can be found in some organisms and specialized cells. Mg(2+) serves as cofactor.

The protein resides in the cytoplasm. The protein localises to the cytoskeleton. In terms of biological role, tubulin is the major constituent of microtubules, a cylinder consisting of laterally associated linear protofilaments composed of alpha- and beta-tubulin heterodimers. Microtubules grow by the addition of GTP-tubulin dimers to the microtubule end, where a stabilizing cap forms. Below the cap, tubulin dimers are in GDP-bound state, owing to GTPase activity of alpha-tubulin. In Arabidopsis thaliana (Mouse-ear cress), this protein is Tubulin beta-4 chain (TUBB4).